The primary structure comprises 198 residues: tRNA (pseudouridine(54)-N(1))-methyltransferase (198 aa).

Leucine 128 serves as a coordination point for S-adenosyl-L-methionine.

The protein belongs to the methyltransferase superfamily. TrmY family. Homodimer.

It localises to the cytoplasm. The enzyme catalyses pseudouridine(54) in tRNA + S-adenosyl-L-methionine = N(1)-methylpseudouridine(54) in tRNA + S-adenosyl-L-homocysteine + H(+). Functionally, specifically catalyzes the N1-methylation of pseudouridine at position 54 (Psi54) in tRNAs. The polypeptide is tRNA (pseudouridine(54)-N(1))-methyltransferase (Natronomonas pharaonis (strain ATCC 35678 / DSM 2160 / CIP 103997 / JCM 8858 / NBRC 14720 / NCIMB 2260 / Gabara) (Halobacterium pharaonis)).